Consider the following 127-residue polypeptide: MORF4 family-associated protein 1-like 1 (127 aa).

Residues 87 to 118 (GEADERVSELCEKAEEKAKEIAKMAEMLVELV) adopt a coiled-coil conformation.

The protein belongs to the MORF4 family-associated protein family.

The chain is MORF4 family-associated protein 1-like 1 (MRFAP1L1) from Homo sapiens (Human).